The sequence spans 284 residues: Bifunctional protein FolD (284 aa).

NADP(+)-binding positions include 164–166 (GRS) and serine 189.

Belongs to the tetrahydrofolate dehydrogenase/cyclohydrolase family. As to quaternary structure, homodimer.

It carries out the reaction (6R)-5,10-methylene-5,6,7,8-tetrahydrofolate + NADP(+) = (6R)-5,10-methenyltetrahydrofolate + NADPH. It catalyses the reaction (6R)-5,10-methenyltetrahydrofolate + H2O = (6R)-10-formyltetrahydrofolate + H(+). It participates in one-carbon metabolism; tetrahydrofolate interconversion. Functionally, catalyzes the oxidation of 5,10-methylenetetrahydrofolate to 5,10-methenyltetrahydrofolate and then the hydrolysis of 5,10-methenyltetrahydrofolate to 10-formyltetrahydrofolate. This chain is Bifunctional protein FolD, found in Listeria innocua serovar 6a (strain ATCC BAA-680 / CLIP 11262).